Consider the following 269-residue polypeptide: 4-hydroxy-tetrahydrodipicolinate reductase (269 aa).

Residues 11–16 (GASGRM) and glutamate 37 contribute to the NAD(+) site. Residue arginine 38 participates in NADP(+) binding. Residues 101–103 (GTT) and 125–128 (AGNM) contribute to the NAD(+) site. The active-site Proton donor/acceptor is histidine 158. Histidine 159 contacts (S)-2,3,4,5-tetrahydrodipicolinate. Lysine 162 serves as the catalytic Proton donor. 168 to 169 (GT) is a (S)-2,3,4,5-tetrahydrodipicolinate binding site.

This sequence belongs to the DapB family.

It is found in the cytoplasm. It carries out the reaction (S)-2,3,4,5-tetrahydrodipicolinate + NAD(+) + H2O = (2S,4S)-4-hydroxy-2,3,4,5-tetrahydrodipicolinate + NADH + H(+). It catalyses the reaction (S)-2,3,4,5-tetrahydrodipicolinate + NADP(+) + H2O = (2S,4S)-4-hydroxy-2,3,4,5-tetrahydrodipicolinate + NADPH + H(+). It functions in the pathway amino-acid biosynthesis; L-lysine biosynthesis via DAP pathway; (S)-tetrahydrodipicolinate from L-aspartate: step 4/4. Functionally, catalyzes the conversion of 4-hydroxy-tetrahydrodipicolinate (HTPA) to tetrahydrodipicolinate. The sequence is that of 4-hydroxy-tetrahydrodipicolinate reductase from Cereibacter sphaeroides (strain ATCC 17023 / DSM 158 / JCM 6121 / CCUG 31486 / LMG 2827 / NBRC 12203 / NCIMB 8253 / ATH 2.4.1.) (Rhodobacter sphaeroides).